Consider the following 371-residue polypeptide: MLLLPLSVLLLLTQPWRSLGAEMTTFSQKILANACTLVMCSPLESGLPGHDGQDGRECPHGEKGDPGSPGPAGRAGRPGWVGPIGPKGDNGFVGEPGPKGDTGPRGPPGMPGPAGREGPSGKQGSMGPPGTPGPKGETGPKGGVGAPGIQGFPGPSGLKGEKGAPGETGAPGRAGVTGPSGAIGPQGPSGARGPPGLKGDRGDPGETGAKGESGLAEVNALKQRVTILDGHLRRFQNAFSQYKKAVLFPDGQAVGEKIFKTAGAVKSYSDAEQLCREAKGQLASPRSSAENEAVTQMVRAQEKNAYLSMNDISTEGRFTYPTGEILVYSNWADGEPNNSDEGQPENCVEIFPDGKWNDVPCSKQLLVICEF.

Positions 1 to 20 (MLLLPLSVLLLLTQPWRSLG) are cleaved as a signal peptide. The Collagen-like domain maps to 46 to 216 (GLPGHDGQDG…TGAKGESGLA (171 aa)). The disordered stretch occupies residues 47–215 (LPGHDGQDGR…ETGAKGESGL (169 aa)). Positions 51-65 (DGQDGRECPHGEKGD) are enriched in basic and acidic residues. A 5-hydroxylysine modification is found at Lys63. Residues 71–83 (PAGRAGRPGWVGP) show a composition bias toward low complexity. Pro78 carries the post-translational modification 4-hydroxyproline. At Lys87 the chain carries 5-hydroxylysine. At Pro96 the chain carries 4-hydroxyproline. Lys99 is subject to 5-hydroxylysine. 4-hydroxyproline occurs at positions 108, 111, 129, and 132. A 5-hydroxylysine mark is found at Lys135 and Lys141. Residues 139-148 (GPKGGVGAPG) are compositionally biased toward gly residues. Residues Pro147 and Pro153 each carry the 4-hydroxyproline modification. Residues Lys159 and Lys162 each carry the 5-hydroxylysine modification. 4-hydroxyproline is present on residues Pro171 and Pro195. Lys198 carries the 5-hydroxylysine modification. Residues 201–203 (RGD) carry the Cell attachment site motif. The 99-residue stretch at 273-371 (QLCREAKGQL…SKQLLVICEF (99 aa)) folds into the C-type lectin domain. 2 disulfides stabilise this stretch: Cys275–Cys369 and Cys347–Cys361. Residue Asn337 is glycosylated (N-linked (GlcNAc...) asparagine).

The protein belongs to the SFTPD family. In terms of assembly, oligomeric complex of 4 set of homotrimers. In terms of processing, the hydroxylysines may be O-glycosylated.

In terms of biological role, calcium-dependent lectin-like protein which binds to a yeast cell wall extract and immune complexes through the complement component (C3bi). It is capable of binding non-reducing terminal N-acetylglucosamine, mannose, and fucose residues. The chain is Conglutinin (CGN1) from Bos taurus (Bovine).